A 336-amino-acid chain; its full sequence is DNA-directed RNA polymerase subunit alpha (336 aa).

Residues 1 to 238 form an alpha N-terminal domain (alpha-NTD) region; the sequence is MNDLDLNLVP…NLFLPFLQAE (238 aa). Residues 267–336 are alpha C-terminal domain (alpha-CTD); it reads AKKVTFQHIF…LQKRFGMRLQ (70 aa).

The protein belongs to the RNA polymerase alpha chain family. As to quaternary structure, in plastids the minimal PEP RNA polymerase catalytic core is composed of four subunits: alpha, beta, beta', and beta''. When a (nuclear-encoded) sigma factor is associated with the core the holoenzyme is formed, which can initiate transcription.

The protein resides in the plastid. It is found in the chloroplast. The enzyme catalyses RNA(n) + a ribonucleoside 5'-triphosphate = RNA(n+1) + diphosphate. DNA-dependent RNA polymerase catalyzes the transcription of DNA into RNA using the four ribonucleoside triphosphates as substrates. This is DNA-directed RNA polymerase subunit alpha from Huperzia lucidula (Shining clubmoss).